A 940-amino-acid polypeptide reads, in one-letter code: Protein translocase subunit SecA (940 aa).

Residues Gln85, 103–107 (GEGKT), and Asp505 contribute to the ATP site. The tract at residues 851 to 940 (PVQDGAERPS…KGGGGRRRKK (90 aa)) is disordered. Residues 855 to 865 (GAERPSLEKEG) show a composition bias toward basic and acidic residues. A compositionally biased stretch (basic residues) spans 928–940 (RRRKGGGGRRRKK).

The protein belongs to the SecA family. As to quaternary structure, monomer and homodimer. Part of the essential Sec protein translocation apparatus which comprises SecA, SecYEG and auxiliary proteins SecDF. Other proteins may also be involved.

Its subcellular location is the cell membrane. It is found in the cytoplasm. It catalyses the reaction ATP + H2O + cellular proteinSide 1 = ADP + phosphate + cellular proteinSide 2.. Its function is as follows. Part of the Sec protein translocase complex. Interacts with the SecYEG preprotein conducting channel. Has a central role in coupling the hydrolysis of ATP to the transfer of proteins into and across the cell membrane, serving as an ATP-driven molecular motor driving the stepwise translocation of polypeptide chains across the membrane. This is Protein translocase subunit SecA from Streptomyces griseus.